A 138-amino-acid polypeptide reads, in one-letter code: MRTLWIMAVLLVGVDGGLWQFENMIIKVVKKSGILSYSAYGCYCGWGGRGKPKDATDRCCFVHDCCYGKVTGCNPKLGKYTYSWNNGDIVCEGDGPCKEVCECDRAAAICFRDNLDTYDRNKYWRYPASNCQEDSEPC.

A signal peptide spans 1–16 (MRTLWIMAVLLVGVDG). 7 disulfides stabilise this stretch: cysteine 42-cysteine 131, cysteine 44-cysteine 60, cysteine 59-cysteine 110, cysteine 65-cysteine 138, cysteine 66-cysteine 103, cysteine 73-cysteine 97, and cysteine 91-cysteine 101. Ca(2+)-binding residues include tyrosine 43, glycine 45, and glycine 47. Histidine 63 is an active-site residue. Aspartate 64 lines the Ca(2+) pocket. Aspartate 104 is an active-site residue.

The protein belongs to the phospholipase A2 family. Group II subfamily. D49 sub-subfamily. As to quaternary structure, homodimer. Ca(2+) is required as a cofactor. As to expression, expressed by the venom gland.

It localises to the secreted. It carries out the reaction a 1,2-diacyl-sn-glycero-3-phosphocholine + H2O = a 1-acyl-sn-glycero-3-phosphocholine + a fatty acid + H(+). Functionally, snake venom phospholipase A2 (PLA2) that is highly lipolytic and myolytic. PLA2 catalyzes the calcium-dependent hydrolysis of the 2-acyl groups in 3-sn-phosphoglycerides. The chain is Acidic phospholipase A2 1 from Protobothrops flavoviridis (Habu).